The chain runs to 257 residues: Imidazole glycerol phosphate synthase subunit HisF (257 aa).

Residues D11 and D130 contribute to the active site.

Belongs to the HisA/HisF family. Heterodimer of HisH and HisF.

The protein localises to the cytoplasm. The enzyme catalyses 5-[(5-phospho-1-deoxy-D-ribulos-1-ylimino)methylamino]-1-(5-phospho-beta-D-ribosyl)imidazole-4-carboxamide + L-glutamine = D-erythro-1-(imidazol-4-yl)glycerol 3-phosphate + 5-amino-1-(5-phospho-beta-D-ribosyl)imidazole-4-carboxamide + L-glutamate + H(+). The protein operates within amino-acid biosynthesis; L-histidine biosynthesis; L-histidine from 5-phospho-alpha-D-ribose 1-diphosphate: step 5/9. IGPS catalyzes the conversion of PRFAR and glutamine to IGP, AICAR and glutamate. The HisF subunit catalyzes the cyclization activity that produces IGP and AICAR from PRFAR using the ammonia provided by the HisH subunit. This chain is Imidazole glycerol phosphate synthase subunit HisF, found in Shewanella putrefaciens (strain CN-32 / ATCC BAA-453).